We begin with the raw amino-acid sequence, 240 residues long: UDP-2,3-diacylglucosamine hydrolase (240 aa).

Aspartate 8, histidine 10, aspartate 41, asparagine 79, and histidine 114 together coordinate Mn(2+). A substrate-binding site is contributed by asparagine 79–arginine 80. Substrate is bound by residues aspartate 122, serine 160, asparagine 164, lysine 167, and histidine 195. Mn(2+) is bound by residues histidine 195 and histidine 197.

It belongs to the LpxH family. Mn(2+) serves as cofactor.

It is found in the cell inner membrane. It catalyses the reaction UDP-2-N,3-O-bis[(3R)-3-hydroxytetradecanoyl]-alpha-D-glucosamine + H2O = 2-N,3-O-bis[(3R)-3-hydroxytetradecanoyl]-alpha-D-glucosaminyl 1-phosphate + UMP + 2 H(+). Its pathway is glycolipid biosynthesis; lipid IV(A) biosynthesis; lipid IV(A) from (3R)-3-hydroxytetradecanoyl-[acyl-carrier-protein] and UDP-N-acetyl-alpha-D-glucosamine: step 4/6. Hydrolyzes the pyrophosphate bond of UDP-2,3-diacylglucosamine to yield 2,3-diacylglucosamine 1-phosphate (lipid X) and UMP by catalyzing the attack of water at the alpha-P atom. Involved in the biosynthesis of lipid A, a phosphorylated glycolipid that anchors the lipopolysaccharide to the outer membrane of the cell. The protein is UDP-2,3-diacylglucosamine hydrolase of Salmonella arizonae (strain ATCC BAA-731 / CDC346-86 / RSK2980).